Reading from the N-terminus, the 644-residue chain is Chaperone protein DnaK (644 aa).

Phosphothreonine; by autocatalysis is present on Thr-195. The tract at residues 598 to 644 (KQAAPGAGAPGAGPGPEAAGGAQQAQAEPKKDEGVIDAEYVDVDEKK) is disordered. Low complexity predominate over residues 612–624 (GPEAAGGAQQAQA). Residues 632-644 (VIDAEYVDVDEKK) show a composition bias toward acidic residues.

This sequence belongs to the heat shock protein 70 family.

Its function is as follows. Acts as a chaperone. This is Chaperone protein DnaK from Koribacter versatilis (strain Ellin345).